We begin with the raw amino-acid sequence, 159 residues long: Protein A40 (159 aa).

Residues 1 to 9 (MNKHKTDYA) are Cytoplasmic-facing. The helical; Signal-anchor for type II membrane protein transmembrane segment at 10–30 (GYACCVICGLIVGIIFTATLL) threads the bilayer. At 31-159 (KVVERKLVHT…TPKLHSCYTI (129 aa)) the chain is on the extracellular side. Positions 63–159 (YNNKCIHLST…TPKLHSCYTI (97 aa)) constitute a C-type lectin domain.

This sequence belongs to the poxviridae A40 protein family.

Its subcellular location is the host membrane. This Bos taurus (Bovine) protein is Protein A40.